We begin with the raw amino-acid sequence, 430 residues long: Enolase (430 aa).

Residue glutamine 163 participates in (2R)-2-phosphoglycerate binding. The active-site Proton donor is glutamate 205. Mg(2+)-binding residues include aspartate 242, glutamate 285, and aspartate 312. Residues lysine 337, arginine 366, serine 367, and lysine 388 each coordinate (2R)-2-phosphoglycerate. Catalysis depends on lysine 337, which acts as the Proton acceptor.

Belongs to the enolase family. Mg(2+) serves as cofactor.

The protein resides in the cytoplasm. It is found in the secreted. It localises to the cell surface. The catalysed reaction is (2R)-2-phosphoglycerate = phosphoenolpyruvate + H2O. Its pathway is carbohydrate degradation; glycolysis; pyruvate from D-glyceraldehyde 3-phosphate: step 4/5. Functionally, catalyzes the reversible conversion of 2-phosphoglycerate (2-PG) into phosphoenolpyruvate (PEP). It is essential for the degradation of carbohydrates via glycolysis. The chain is Enolase from Rhodopseudomonas palustris (strain BisB18).